We begin with the raw amino-acid sequence, 205 residues long: Methylthioribulose-1-phosphate dehydratase (205 aa).

Histidine 96 and histidine 98 together coordinate Zn(2+).

This sequence belongs to the aldolase class II family. MtnB subfamily. Zn(2+) serves as cofactor.

The catalysed reaction is 5-(methylsulfanyl)-D-ribulose 1-phosphate = 5-methylsulfanyl-2,3-dioxopentyl phosphate + H2O. It participates in amino-acid biosynthesis; L-methionine biosynthesis via salvage pathway; L-methionine from S-methyl-5-thio-alpha-D-ribose 1-phosphate: step 2/6. In terms of biological role, catalyzes the dehydration of methylthioribulose-1-phosphate (MTRu-1-P) into 2,3-diketo-5-methylthiopentyl-1-phosphate (DK-MTP-1-P). In Exiguobacterium sp. (strain ATCC BAA-1283 / AT1b), this protein is Methylthioribulose-1-phosphate dehydratase.